Here is a 385-residue protein sequence, read N- to C-terminus: DNA replication and repair protein RecF (385 aa).

30–37 lines the ATP pocket; sequence GANAAGKT.

Belongs to the RecF family.

Its subcellular location is the cytoplasm. Functionally, the RecF protein is involved in DNA metabolism; it is required for DNA replication and normal SOS inducibility. RecF binds preferentially to single-stranded, linear DNA. It also seems to bind ATP. This is DNA replication and repair protein RecF from Herpetosiphon aurantiacus (strain ATCC 23779 / DSM 785 / 114-95).